The sequence spans 453 residues: Bifunctional protein GlmU (453 aa).

Residues Met-1–Lys-225 form a pyrophosphorylase region. Residues Leu-6 to Gly-9, Lys-20, Gln-71, Gly-76 to Thr-77, Tyr-98 to Asp-100, Gly-135, Glu-150, Asn-165, and Asn-223 each bind UDP-N-acetyl-alpha-D-glucosamine. Asp-100 is a binding site for Mg(2+). A Mg(2+)-binding site is contributed by Asn-223. The linker stretch occupies residues Ala-226–Glu-246. The segment at Gly-247–Ser-453 is N-acetyltransferase. The UDP-N-acetyl-alpha-D-glucosamine site is built by Arg-329 and Lys-347. Catalysis depends on His-359, which acts as the Proton acceptor. Positions 362 and 373 each coordinate UDP-N-acetyl-alpha-D-glucosamine. Acetyl-CoA is bound by residues Ala-376, Asn-382–Tyr-383, Ser-401, and Ala-419.

In the N-terminal section; belongs to the N-acetylglucosamine-1-phosphate uridyltransferase family. This sequence in the C-terminal section; belongs to the transferase hexapeptide repeat family. Homotrimer. Mg(2+) serves as cofactor.

The protein localises to the cytoplasm. The catalysed reaction is alpha-D-glucosamine 1-phosphate + acetyl-CoA = N-acetyl-alpha-D-glucosamine 1-phosphate + CoA + H(+). It catalyses the reaction N-acetyl-alpha-D-glucosamine 1-phosphate + UTP + H(+) = UDP-N-acetyl-alpha-D-glucosamine + diphosphate. The protein operates within nucleotide-sugar biosynthesis; UDP-N-acetyl-alpha-D-glucosamine biosynthesis; N-acetyl-alpha-D-glucosamine 1-phosphate from alpha-D-glucosamine 6-phosphate (route II): step 2/2. It functions in the pathway nucleotide-sugar biosynthesis; UDP-N-acetyl-alpha-D-glucosamine biosynthesis; UDP-N-acetyl-alpha-D-glucosamine from N-acetyl-alpha-D-glucosamine 1-phosphate: step 1/1. It participates in bacterial outer membrane biogenesis; LPS lipid A biosynthesis. Functionally, catalyzes the last two sequential reactions in the de novo biosynthetic pathway for UDP-N-acetylglucosamine (UDP-GlcNAc). The C-terminal domain catalyzes the transfer of acetyl group from acetyl coenzyme A to glucosamine-1-phosphate (GlcN-1-P) to produce N-acetylglucosamine-1-phosphate (GlcNAc-1-P), which is converted into UDP-GlcNAc by the transfer of uridine 5-monophosphate (from uridine 5-triphosphate), a reaction catalyzed by the N-terminal domain. This is Bifunctional protein GlmU from Burkholderia vietnamiensis (strain G4 / LMG 22486) (Burkholderia cepacia (strain R1808)).